Here is a 502-residue protein sequence, read N- to C-terminus: Myocilin (502 aa).

A signal peptide spans 1–31; sequence MPSCAYCCSCGPKMPALQLLFLACLVWGMGA. Residues 82-183 adopt a coiled-coil conformation; it reads ADLESTKARV…QEVARLRRGQ (102 aa). The interval 166-198 is disordered; that stretch reads ARRLEGSSQEVARLRRGQCPSTHHPSQDMLPGS. Asn229 is a glycosylation site (N-linked (GlcNAc...) asparagine). Residues 242–501 form the Olfactomedin-like domain; sequence GCGVLMWVGE…MVTYDIKLSE (260 aa). An intrachain disulfide couples Cys243 to Cys431. The Ca(2+) site is built by Asp378, Asn426, Ala427, Val475, and Asp476.

As to quaternary structure, homodimer (via N-terminus). Can also form higher oligomers. Interacts with OLFM3, FN1, NRCAM, GLDN and NFASC. Interacts (via N-terminus) with MYL2. Interacts with SFRP1, FRZB, FZD7, FZD10, FZD1 and WIF1; regulates Wnt signaling. Interacts with SNTA1; regulates muscle hypertrophy. Interacts with ERBB2 and ERBB3; activates ERBB2-ERBB3 signaling pathway. Interacts with SNCG; affects its secretion and its aggregation. In terms of processing, palmitoylated. Undergoes a calcium-dependent proteolytic cleavage at Gln-225 by CAPN2 in the endoplasmic reticulum. The result is the production of two fragments, one of 35 kDa containing the C-terminal olfactomedin-like domain, and another of 20 kDa containing the N-terminal leucine zipper-like domain. Post-translationally, glycosylated. Highly expressed in skeletal muscle and retina. Also detected at lower levels in thyroid gland but not in other endocrine glands such as the adrenal or pituitary glands.

It localises to the secreted. The protein resides in the golgi apparatus. Its subcellular location is the cytoplasmic vesicle. The protein localises to the extracellular space. It is found in the extracellular matrix. It localises to the extracellular exosome. The protein resides in the mitochondrion. Its subcellular location is the mitochondrion intermembrane space. The protein localises to the mitochondrion inner membrane. It is found in the mitochondrion outer membrane. It localises to the rough endoplasmic reticulum. The protein resides in the cell projection. Its subcellular location is the cilium. The protein localises to the endoplasmic reticulum. Secreted glycoprotein regulating the activation of different signaling pathways in adjacent cells to control different processes including cell adhesion, cell-matrix adhesion, cytoskeleton organization and cell migration. Promotes substrate adhesion, spreading and formation of focal contacts. Negatively regulates cell-matrix adhesion and stress fiber assembly through Rho protein signal transduction. Modulates the organization of actin cytoskeleton by stimulating the formation of stress fibers through interactions with components of Wnt signaling pathways. Promotes cell migration through activation of PTK2 and the downstream phosphatidylinositol 3-kinase signaling. Plays a role in bone formation and promotes osteoblast differentiation in a dose-dependent manner through mitogen-activated protein kinase signaling. Mediates myelination in the peripheral nervous system through ERBB2/ERBB3 signaling. Plays a role as a regulator of muscle hypertrophy through the components of dystrophin-associated protein complex. Involved in positive regulation of mitochondrial depolarization. Plays a role in neurite outgrowth. May participate in the obstruction of fluid outflow in the trabecular meshwork. This Rattus norvegicus (Rat) protein is Myocilin (Myoc).